The sequence spans 369 residues: Methionine import ATP-binding protein MetN (369 aa).

In terms of domain architecture, ABC transporter spans 31-266 (VEMKDVRRMF…PQSPVTQSML (236 aa)). 63-70 (GRSGAGKS) contributes to the ATP binding site.

Belongs to the ABC transporter superfamily. Methionine importer (TC 3.A.1.24) family. As to quaternary structure, the complex is composed of two ATP-binding proteins (MetN), two transmembrane proteins (MetI) and a solute-binding protein (MetQ).

The protein resides in the cell inner membrane. The catalysed reaction is L-methionine(out) + ATP + H2O = L-methionine(in) + ADP + phosphate + H(+). It carries out the reaction D-methionine(out) + ATP + H2O = D-methionine(in) + ADP + phosphate + H(+). Part of the ABC transporter complex MetNIQ involved in methionine import. Responsible for energy coupling to the transport system. The chain is Methionine import ATP-binding protein MetN from Brucella abortus (strain 2308).